Consider the following 220-residue polypeptide: Adenylate kinase (220 aa).

10 to 15 (GAGKGT) serves as a coordination point for ATP. The NMP stretch occupies residues 30 to 59 (STGDMLRAAVKAGSPLGVEAKGYMDAGKLV). AMP contacts are provided by residues Thr31, Arg36, 57 to 59 (KLV), 85 to 88 (GFPR), and Gln92. The segment at 122–150 (GRRTHPASGRTYHVKFNPPKVEGKDDVTG) is disordered. Residues 122-159 (GRRTHPASGRTYHVKFNPPKVEGKDDVTGEPLIQRDDD) form an LID region. ATP contacts are provided by residues Arg123 and 132–133 (TY). Residues Arg156 and Arg167 each coordinate AMP. Residue Gly206 coordinates ATP.

It belongs to the adenylate kinase family. Monomer.

Its subcellular location is the cytoplasm. The enzyme catalyses AMP + ATP = 2 ADP. Its pathway is purine metabolism; AMP biosynthesis via salvage pathway; AMP from ADP: step 1/1. In terms of biological role, catalyzes the reversible transfer of the terminal phosphate group between ATP and AMP. Plays an important role in cellular energy homeostasis and in adenine nucleotide metabolism. In Burkholderia ambifaria (strain MC40-6), this protein is Adenylate kinase.